The primary structure comprises 411 residues: Probable tRNA pseudouridine synthase D (411 aa).

Asp81 functions as the Nucleophile in the catalytic mechanism. A TRUD domain is found at 154-375; that stretch reads GTPNFFGLQR…SGSYRPADTL (222 aa).

It belongs to the pseudouridine synthase TruD family.

It carries out the reaction uridine(13) in tRNA = pseudouridine(13) in tRNA. Could be responsible for synthesis of pseudouridine from uracil-13 in transfer RNAs. The protein is Probable tRNA pseudouridine synthase D of Archaeoglobus fulgidus (strain ATCC 49558 / DSM 4304 / JCM 9628 / NBRC 100126 / VC-16).